We begin with the raw amino-acid sequence, 275 residues long: MALQQDIIEALGVKPTIDADEEIRISVDFLKSYLKRYPFLKSLVLGISGGQDSTLTGKLCQMAMTELRAESGDSDYQFIAVRLPHGVQADEQDCQDAITFIQPDRVLTVNIKAAVQASEQALREAGITLSDFIRGNEKARERMKVQYSIAGMNAGVVVGTDHAAEAVTGFFTKYGDGGTDINPIFRLNKGQGKRLLNALGCPEHLWLKHPTADLEDDRPGLQDEVALGVTYEMIDRYLQGESIDPAAAKIIEGWYVKTEHKRRTPITVFDDFWKK.

46–53 is a binding site for ATP; the sequence is GISGGQDS. Aspartate 52 provides a ligand contact to Mg(2+). Arginine 140 contributes to the deamido-NAD(+) binding site. Threonine 160 serves as a coordination point for ATP. Glutamate 165 provides a ligand contact to Mg(2+). Residues lysine 173 and aspartate 180 each contribute to the deamido-NAD(+) site. ATP contacts are provided by lysine 189 and threonine 211. 260-261 contributes to the deamido-NAD(+) binding site; sequence HK.

The protein belongs to the NAD synthetase family. Homodimer.

It catalyses the reaction deamido-NAD(+) + NH4(+) + ATP = AMP + diphosphate + NAD(+) + H(+). It participates in cofactor biosynthesis; NAD(+) biosynthesis; NAD(+) from deamido-NAD(+) (ammonia route): step 1/1. Catalyzes the ATP-dependent amidation of deamido-NAD to form NAD. Uses ammonia as a nitrogen source. The sequence is that of NH(3)-dependent NAD(+) synthetase from Erwinia tasmaniensis (strain DSM 17950 / CFBP 7177 / CIP 109463 / NCPPB 4357 / Et1/99).